A 468-amino-acid chain; its full sequence is ATP synthase subunit beta (468 aa).

155–162 (GGAGVGKT) lines the ATP pocket.

Belongs to the ATPase alpha/beta chains family. In terms of assembly, F-type ATPases have 2 components, CF(1) - the catalytic core - and CF(0) - the membrane proton channel. CF(1) has five subunits: alpha(3), beta(3), gamma(1), delta(1), epsilon(1). CF(0) has three main subunits: a(1), b(2) and c(9-12). The alpha and beta chains form an alternating ring which encloses part of the gamma chain. CF(1) is attached to CF(0) by a central stalk formed by the gamma and epsilon chains, while a peripheral stalk is formed by the delta and b chains.

The protein resides in the cell inner membrane. It catalyses the reaction ATP + H2O + 4 H(+)(in) = ADP + phosphate + 5 H(+)(out). Functionally, produces ATP from ADP in the presence of a proton gradient across the membrane. The catalytic sites are hosted primarily by the beta subunits. In Bdellovibrio bacteriovorus (strain ATCC 15356 / DSM 50701 / NCIMB 9529 / HD100), this protein is ATP synthase subunit beta.